The following is a 128-amino-acid chain: Iron-sulfur cluster insertion protein ErpA (128 aa).

The iron-sulfur cluster site is built by Cys-56, Cys-120, and Cys-122.

The protein belongs to the HesB/IscA family. As to quaternary structure, homodimer. The cofactor is iron-sulfur cluster.

Its function is as follows. Required for insertion of 4Fe-4S clusters for at least IspG. In Xylella fastidiosa (strain M23), this protein is Iron-sulfur cluster insertion protein ErpA.